A 337-amino-acid chain; its full sequence is MSGSPVKRQRMESALDQLKQFTTVVADTGDFNAIDEYKPQDATTNPSLILAAAQMPAYQELVEEAIAYGKKLGGPQEEQIKNAIDKLFVLFGAEILKKIPGRVSTEVDARLSFDKDAMVARAKRLIELYKEAGISKDRILIKLSSTWEGIQAGKELEEQHGIHCNMTLLFSFAQAVACAEAGVTLISPFVGRILDWHVANTDKKSYEPQEDPGVKSVTKIYNYYKKFGYKTIVMGASFRNTGEIKALAGCDFLTISPKLLGELLKDNTKLAPVLSIKAAQTSDLGKIHLDEKAFRWLHSEDQMAVEKLSDGIRKFAADAIKLERMLTERMFSAENGK.

The Nuclear localization signal motif lies at 1-10 (MSGSPVKRQR). Residue lysine 115 is modified to N6-acetyllysine. The Schiff-base intermediate with substrate role is filled by lysine 142. Residue lysine 219 is modified to N6-acetyllysine. 2 positions are modified to phosphoserine: serine 237 and serine 256. N6-acetyllysine is present on residues lysine 269, lysine 286, and lysine 321.

Belongs to the transaldolase family. Type 1 subfamily. Homodimer. Interacts with KPNA1 and KPNA4.

The protein resides in the nucleus. The protein localises to the cytoplasm. It catalyses the reaction D-sedoheptulose 7-phosphate + D-glyceraldehyde 3-phosphate = D-erythrose 4-phosphate + beta-D-fructose 6-phosphate. Its pathway is carbohydrate degradation; pentose phosphate pathway; D-glyceraldehyde 3-phosphate and beta-D-fructose 6-phosphate from D-ribose 5-phosphate and D-xylulose 5-phosphate (non-oxidative stage): step 2/3. Functionally, catalyzes the rate-limiting step of the non-oxidative phase in the pentose phosphate pathway. Catalyzes the reversible conversion of sedheptulose-7-phosphate and D-glyceraldehyde 3-phosphate into erythrose-4-phosphate and beta-D-fructose 6-phosphate. The sequence is that of Transaldolase (TALDO1) from Cricetulus griseus (Chinese hamster).